The sequence spans 119 residues: Protein Wnt-4 (119 aa).

Residue Ser1 is the site of O-palmitoleoyl serine; by PORCN attachment. Cystine bridges form between Cys69–Cys100 and Cys85–Cys95. The N-linked (GlcNAc...) asparagine glycan is linked to Asn86.

This sequence belongs to the Wnt family. Palmitoleoylation is required for efficient binding to frizzled receptors. Depalmitoleoylation leads to Wnt signaling pathway inhibition.

The protein localises to the secreted. The protein resides in the extracellular space. It localises to the extracellular matrix. Ligand for members of the frizzled family of seven transmembrane receptors. Plays an important role in embryonic development. This chain is Protein Wnt-4 (WNT-4), found in Plethodon jordani (Red-cheeked salamander).